The primary structure comprises 336 residues: NADH-quinone oxidoreductase subunit H (336 aa).

Helical transmembrane passes span 12 to 32 (FLKI…LTWF), 84 to 104 (VVMA…GPGF), 118 to 138 (VNIA…GTIF), 156 to 176 (AAVV…VILL), 193 to 213 (GVWF…CMLA), 247 to 267 (LAEW…LFFG), 274 to 294 (IFGP…LVFF), and 313 to 333 (IAWK…AVVV).

This sequence belongs to the complex I subunit 1 family. NDH-1 is composed of 14 different subunits. Subunits NuoA, H, J, K, L, M, N constitute the membrane sector of the complex.

Its subcellular location is the cell inner membrane. It catalyses the reaction a quinone + NADH + 5 H(+)(in) = a quinol + NAD(+) + 4 H(+)(out). Functionally, NDH-1 shuttles electrons from NADH, via FMN and iron-sulfur (Fe-S) centers, to quinones in the respiratory chain. The immediate electron acceptor for the enzyme in this species is believed to be ubiquinone. Couples the redox reaction to proton translocation (for every two electrons transferred, four hydrogen ions are translocated across the cytoplasmic membrane), and thus conserves the redox energy in a proton gradient. This subunit may bind ubiquinone. This Aquifex aeolicus (strain VF5) protein is NADH-quinone oxidoreductase subunit H.